A 287-amino-acid chain; its full sequence is Bifunctional protein FolD (287 aa).

NADP(+) is bound by residues 171–173 (GHS), isoleucine 196, and isoleucine 237.

Belongs to the tetrahydrofolate dehydrogenase/cyclohydrolase family. In terms of assembly, homodimer.

The catalysed reaction is (6R)-5,10-methylene-5,6,7,8-tetrahydrofolate + NADP(+) = (6R)-5,10-methenyltetrahydrofolate + NADPH. It catalyses the reaction (6R)-5,10-methenyltetrahydrofolate + H2O = (6R)-10-formyltetrahydrofolate + H(+). Its pathway is one-carbon metabolism; tetrahydrofolate interconversion. Catalyzes the oxidation of 5,10-methylenetetrahydrofolate to 5,10-methenyltetrahydrofolate and then the hydrolysis of 5,10-methenyltetrahydrofolate to 10-formyltetrahydrofolate. This chain is Bifunctional protein FolD, found in Methanosarcina mazei (strain ATCC BAA-159 / DSM 3647 / Goe1 / Go1 / JCM 11833 / OCM 88) (Methanosarcina frisia).